We begin with the raw amino-acid sequence, 317 residues long: MTSSAKSSFVLGHRHLLGIEGLSVADITGLLDLSEEYVELNRQVDKKRTSLRGLTQVNLFFEASTRTQSSFEIAGKRLGADVMNMSVSSLSTRKGETLVDTAMTLNAMHPDILVMRHSASGAVELLARKVDGSVVNAGDGAHEHPTQALLDALTIRRNKGRLDGLLVAICGDVLHSRVARSNIILLNAMGARVRVVAPSTLLPPGIERMGVEVARDMREGLDGADIVMMLRLQRERMSGSFVPSSSEYFHYFGLDQKKLAYAKPNALVMHPGPMNRGVEIDSIVADGTQSLIREQVEMGVAVRMAVLEALARNLPNA.

Carbamoyl phosphate-binding residues include Arg-66 and Thr-67. Lys-94 contacts L-aspartate. Arg-116, His-144, and Gln-147 together coordinate carbamoyl phosphate. L-aspartate is bound by residues Arg-177 and Arg-231. Residues Gly-272 and Pro-273 each coordinate carbamoyl phosphate.

Belongs to the aspartate/ornithine carbamoyltransferase superfamily. ATCase family. Heterododecamer (2C3:3R2) of six catalytic PyrB chains organized as two trimers (C3), and six regulatory PyrI chains organized as three dimers (R2).

It carries out the reaction carbamoyl phosphate + L-aspartate = N-carbamoyl-L-aspartate + phosphate + H(+). Its pathway is pyrimidine metabolism; UMP biosynthesis via de novo pathway; (S)-dihydroorotate from bicarbonate: step 2/3. Functionally, catalyzes the condensation of carbamoyl phosphate and aspartate to form carbamoyl aspartate and inorganic phosphate, the committed step in the de novo pyrimidine nucleotide biosynthesis pathway. This Nitrobacter winogradskyi (strain ATCC 25391 / DSM 10237 / CIP 104748 / NCIMB 11846 / Nb-255) protein is Aspartate carbamoyltransferase catalytic subunit.